A 455-amino-acid polypeptide reads, in one-letter code: Serine--tRNA ligase (455 aa).

252–254 (TAE) provides a ligand contact to L-serine. ATP contacts are provided by residues 283–285 (RKE) and valine 299. Residue glutamate 306 coordinates L-serine. Residue 370–373 (EVVS) participates in ATP binding. L-serine is bound at residue threonine 406.

It belongs to the class-II aminoacyl-tRNA synthetase family. Type-1 seryl-tRNA synthetase subfamily. Homodimer. The tRNA molecule binds across the dimer.

It is found in the cytoplasm. The catalysed reaction is tRNA(Ser) + L-serine + ATP = L-seryl-tRNA(Ser) + AMP + diphosphate + H(+). It carries out the reaction tRNA(Sec) + L-serine + ATP = L-seryl-tRNA(Sec) + AMP + diphosphate + H(+). It functions in the pathway aminoacyl-tRNA biosynthesis; selenocysteinyl-tRNA(Sec) biosynthesis; L-seryl-tRNA(Sec) from L-serine and tRNA(Sec): step 1/1. Its function is as follows. Catalyzes the attachment of serine to tRNA(Ser). Is also able to aminoacylate tRNA(Sec) with serine, to form the misacylated tRNA L-seryl-tRNA(Sec), which will be further converted into selenocysteinyl-tRNA(Sec). In Thermococcus gammatolerans (strain DSM 15229 / JCM 11827 / EJ3), this protein is Serine--tRNA ligase.